The following is a 346-amino-acid chain: MVSSNFYKNLGPRKLMAIIDFLHDIIEPPKVHEDIVIHDIKILQEASSNDISFLSNHKYSEFLKTTKAAACIVPKNFTGEANPNTVLIRAENSYFAYGKLIDFFYAPIKSYHAKIMKSAIVADSATIGKNCYIGHNVVIEDDVIIGDDSIIESGSFIGRGVNIGKNARIEQHVSINYAIIGDDALILAGAKIGQEGFGFSTEKGVHHKIFHIGVVKIGNNVEIGSNTTIDRGSLQDTIIEDLCRIDNLVQIGHGVKIGKGSIIVAQAGIAGSSTIGKYCALGGQVGIAGHLNICDGVQVAAQGGVLQNIEACKIVGGSPAVPIMDWHRQSVIMKQLVKTSNSKLKK.

Catalysis depends on H253, which acts as the Proton acceptor.

Belongs to the transferase hexapeptide repeat family. LpxD subfamily. In terms of assembly, homotrimer.

The catalysed reaction is a UDP-3-O-[(3R)-3-hydroxyacyl]-alpha-D-glucosamine + a (3R)-hydroxyacyl-[ACP] = a UDP-2-N,3-O-bis[(3R)-3-hydroxyacyl]-alpha-D-glucosamine + holo-[ACP] + H(+). Its pathway is bacterial outer membrane biogenesis; LPS lipid A biosynthesis. Its function is as follows. Catalyzes the N-acylation of UDP-3-O-acylglucosamine using 3-hydroxyacyl-ACP as the acyl donor. Is involved in the biosynthesis of lipid A, a phosphorylated glycolipid that anchors the lipopolysaccharide to the outer membrane of the cell. This chain is UDP-3-O-acylglucosamine N-acyltransferase, found in Rickettsia akari (strain Hartford).